The following is a 216-amino-acid chain: Pyridoxine/pyridoxamine 5'-phosphate oxidase (216 aa).

Residues 9 to 12 (RLSY) and Arg-67 contribute to the substrate site. FMN contacts are provided by residues 62–67 (RIVLLR), 77–78 (YT), Lys-84, and Gln-106. Substrate contacts are provided by Tyr-124, Arg-128, and Ser-132. Residues 142–143 (QS) and Trp-188 each bind FMN. Substrate is bound at residue 194 to 196 (RMH). Arg-198 provides a ligand contact to FMN.

The protein belongs to the pyridoxamine 5'-phosphate oxidase family. In terms of assembly, homodimer. FMN is required as a cofactor.

It carries out the reaction pyridoxamine 5'-phosphate + O2 + H2O = pyridoxal 5'-phosphate + H2O2 + NH4(+). The catalysed reaction is pyridoxine 5'-phosphate + O2 = pyridoxal 5'-phosphate + H2O2. It participates in cofactor metabolism; pyridoxal 5'-phosphate salvage; pyridoxal 5'-phosphate from pyridoxamine 5'-phosphate: step 1/1. Its pathway is cofactor metabolism; pyridoxal 5'-phosphate salvage; pyridoxal 5'-phosphate from pyridoxine 5'-phosphate: step 1/1. Catalyzes the oxidation of either pyridoxine 5'-phosphate (PNP) or pyridoxamine 5'-phosphate (PMP) into pyridoxal 5'-phosphate (PLP). The chain is Pyridoxine/pyridoxamine 5'-phosphate oxidase from Psychrobacter cryohalolentis (strain ATCC BAA-1226 / DSM 17306 / VKM B-2378 / K5).